The following is a 1137-amino-acid chain: Ribonucleoside-diphosphate reductase large subunit (1137 aa).

Positions 1–32 (MASRPAASSPVEARAPVGGQEAGGPSAATQGE) are disordered. The RIP homotypic interaction motif (RHIM) signature appears at 64 to 84 (SYRISDNNFVQCGSNCTMIID). 2 disordered regions span residues 124–159 (GGTPRRSAGTSTGTQTADVPTEALGGPPPPPRFTLG) and 173–315 (AVFG…YPVP). Residues 131-141 (AGTSTGTQTAD) show a composition bias toward polar residues. Residues 196 to 206 (SDSDDSEDTDS) show a composition bias toward acidic residues. The segment covering 281 to 290 (AGAGLAADPA) has biased composition (low complexity). The span at 291-304 (VARDDAEGLSDPRP) shows a compositional bias: basic and acidic residues. Substrate-binding positions include threonine 566, 581–582 (SC), glycine 612, 791–795 (NLCTE), and 968–972 (PTAAS). Cysteine 582 and cysteine 808 form a disulfide bridge. Asparagine 791 acts as the Proton acceptor in catalysis. Cysteine 793 functions as the Cysteine radical intermediate in the catalytic mechanism. Residue glutamate 795 is the Proton acceptor of the active site.

This sequence belongs to the ribonucleoside diphosphate reductase large chain family. Heterotetramer composed of a homodimer of the large subunit (R1) and a homodimer of the small subunit (R2). Larger multisubunit protein complex are also active, composed of (R1)n(R2)n. Self-assembles (via RIP homotypic interaction motif/RHIM) into homomeric fibrillar amyloid structures. Interacts (via RHIM) with human RIPK1 (via RHIM). Interacts (via RHIM) with human RIPK3 (via RHIM); the interaction leads to heteromeric amyloid assemblies. Interacts (via RHIM) with human ZBP1 (via RHIM); the interaction leads to heteromeric amyloid assemblies. Interacts (via C-terminus) with host CASP8.

It carries out the reaction a 2'-deoxyribonucleoside 5'-diphosphate + [thioredoxin]-disulfide + H2O = a ribonucleoside 5'-diphosphate + [thioredoxin]-dithiol. Ribonucleoside-diphosphate reductase holoenzyme that provides the precursors necessary for viral DNA synthesis. Allows virus growth in non-dividing cells, as well as reactivation from latency in infected hosts. Catalyzes the biosynthesis of deoxyribonucleotides from the corresponding ribonucleotides. Prevents host necroptosis by targeting host RIPK1 and RIPK3, thereby hampering the formation of necroptotic RIPK1-RIPK3 complexes. Forms hetero-amyloid structures with host proteins RIPK3 or ZBP1 which may prevent RIPK3- and ZBP1-mediated necroptosis. In addition, inhibits extrinsic apoptosis by targeting host CASP8. This is Ribonucleoside-diphosphate reductase large subunit from Human herpesvirus 1 (strain 17) (HHV-1).